We begin with the raw amino-acid sequence, 340 residues long: 4-hydroxythreonine-4-phosphate dehydrogenase (340 aa).

The substrate site is built by H141 and T142. Residues H177, H222, and H277 each coordinate a divalent metal cation. Residues K285, N294, and R303 each contribute to the substrate site.

This sequence belongs to the PdxA family. As to quaternary structure, homodimer. Zn(2+) is required as a cofactor. The cofactor is Mg(2+). Co(2+) serves as cofactor.

It localises to the cytoplasm. The catalysed reaction is 4-(phosphooxy)-L-threonine + NAD(+) = 3-amino-2-oxopropyl phosphate + CO2 + NADH. It functions in the pathway cofactor biosynthesis; pyridoxine 5'-phosphate biosynthesis; pyridoxine 5'-phosphate from D-erythrose 4-phosphate: step 4/5. In terms of biological role, catalyzes the NAD(P)-dependent oxidation of 4-(phosphooxy)-L-threonine (HTP) into 2-amino-3-oxo-4-(phosphooxy)butyric acid which spontaneously decarboxylates to form 3-amino-2-oxopropyl phosphate (AHAP). The protein is 4-hydroxythreonine-4-phosphate dehydrogenase of Maricaulis maris (strain MCS10) (Caulobacter maris).